The chain runs to 323 residues: Mitochondrial glutamate carrier 1 (323 aa).

3 Solcar repeats span residues Ile6 to Gln93, Leu101 to Leu214, and Ser223 to Glu312. 6 helical membrane-spanning segments follow: residues Leu12–Ala32, Tyr62–Ile82, Met107–Leu127, Gly189–Ala209, Ser223–Val243, and Ala292–Glu312.

The protein belongs to the mitochondrial carrier (TC 2.A.29) family. As to expression, expressed at high levels in brain, liver, and pancreas.

Its subcellular location is the mitochondrion inner membrane. It carries out the reaction L-glutamate(in) + H(+)(in) = L-glutamate(out) + H(+)(out). In terms of biological role, mitochondrial glutamate/H(+) symporter. Responsible for the transport of glutamate from the cytosol into the mitochondrial matrix with the concomitant import of a proton. Plays a role in the control of glucose-stimulated insulin secretion. This chain is Mitochondrial glutamate carrier 1, found in Homo sapiens (Human).